The primary structure comprises 499 residues: Alpha-L-arabinofuranosidase B (499 aa).

Positions 1–18 are cleaved as a signal peptide; it reads MFSRRNLVALGLAATVSA. 2 N-linked (GlcNAc...) asparagine glycosylation sites follow: Asn-83 and Asn-202.

It belongs to the glycosyl hydrolase 54 family.

The catalysed reaction is Hydrolysis of terminal non-reducing alpha-L-arabinofuranoside residues in alpha-L-arabinosides.. It participates in glycan metabolism; L-arabinan degradation. Able to hydrolyze 1,5-, 1,3- and 1,2-alpha-linkages not only in L-arabinofuranosyl oligosaccharides, but also in polysac-charides containing terminal non-reducing L-arabinofuranoses in side chains, like L-arabinan, arabinogalactan and arabinoxylan. This is Alpha-L-arabinofuranosidase B (abfB) from Aspergillus niger.